Here is a 131-residue protein sequence, read N- to C-terminus: Small ribosomal subunit protein uS11 (131 aa).

It belongs to the universal ribosomal protein uS11 family. In terms of assembly, part of the 30S ribosomal subunit. Interacts with proteins S7 and S18. Binds to IF-3.

Located on the platform of the 30S subunit, it bridges several disparate RNA helices of the 16S rRNA. Forms part of the Shine-Dalgarno cleft in the 70S ribosome. The protein is Small ribosomal subunit protein uS11 of Helicobacter pylori (strain ATCC 700392 / 26695) (Campylobacter pylori).